The following is a 358-amino-acid chain: MILLGSTGSIGQNALSLARDFRLPVEVLVAGHNLSLLNAQIAEFQPKIIVIADSSRASELSLPKDSKLLFGEEGIIESLHLAQSSFVLNALVGFLGLRPTLESLRLGKTLALANKESLVAGGSFVDASKIIPVDSEHFSLWFLKSDKPFSRLFITASGGAFRDTPLEEIPLQKAQAALRHPNWSMGRKITVDSATMVNKLFEILEARWLFNTKSVDALIERNSLVHALIGYPDGSFSAHIAQADMRLPLAYAMLGKLDQPLGPPLELERLAALSFEPINPSRYPLWNLKEKLLTHPWLGITLNAANEVAVEKFLEGKILFGEIPRYIERSLERFSMIPASIEELFALDSEVRQFAHKL.

Positions 7, 8, 9, 10, 31, 33, and 114 each coordinate NADPH. K115 is a binding site for 1-deoxy-D-xylulose 5-phosphate. E116 contributes to the NADPH binding site. D134 contacts Mn(2+). Residues S135, E136, S157, and H180 each contribute to the 1-deoxy-D-xylulose 5-phosphate site. Residue E136 participates in Mn(2+) binding. G186 serves as a coordination point for NADPH. S193, N198, K199, and E202 together coordinate 1-deoxy-D-xylulose 5-phosphate. E202 is a Mn(2+) binding site.

This sequence belongs to the DXR family. Mg(2+) serves as cofactor. Requires Mn(2+) as cofactor.

The catalysed reaction is 2-C-methyl-D-erythritol 4-phosphate + NADP(+) = 1-deoxy-D-xylulose 5-phosphate + NADPH + H(+). Its pathway is isoprenoid biosynthesis; isopentenyl diphosphate biosynthesis via DXP pathway; isopentenyl diphosphate from 1-deoxy-D-xylulose 5-phosphate: step 1/6. Its function is as follows. Catalyzes the NADPH-dependent rearrangement and reduction of 1-deoxy-D-xylulose-5-phosphate (DXP) to 2-C-methyl-D-erythritol 4-phosphate (MEP). The chain is 1-deoxy-D-xylulose 5-phosphate reductoisomerase from Wolinella succinogenes (strain ATCC 29543 / DSM 1740 / CCUG 13145 / JCM 31913 / LMG 7466 / NCTC 11488 / FDC 602W) (Vibrio succinogenes).